The chain runs to 312 residues: Zinc import ATP-binding protein ZnuC (312 aa).

Residues V13–R228 form the ABC transporter domain. Residue G45–S52 participates in ATP binding. A disordered region spans residues D241–A312. Over residues T243 to A312 the composition is skewed to basic and acidic residues.

This sequence belongs to the ABC transporter superfamily. Zinc importer (TC 3.A.1.15.5) family. The complex is composed of two ATP-binding proteins (ZnuC), two transmembrane proteins (ZnuB) and a solute-binding protein (ZnuA).

It localises to the cell inner membrane. It carries out the reaction Zn(2+)(out) + ATP(in) + H2O(in) = Zn(2+)(in) + ADP(in) + phosphate(in) + H(+)(in). Functionally, part of the ABC transporter complex ZnuABC involved in zinc import. Responsible for energy coupling to the transport system. This chain is Zinc import ATP-binding protein ZnuC, found in Rhizobium etli (strain ATCC 51251 / DSM 11541 / JCM 21823 / NBRC 15573 / CFN 42).